A 165-amino-acid chain; its full sequence is Peptide methionine sulfoxide reductase MsrA (165 aa).

The active site involves Cys-10.

It belongs to the MsrA Met sulfoxide reductase family.

The enzyme catalyses L-methionyl-[protein] + [thioredoxin]-disulfide + H2O = L-methionyl-(S)-S-oxide-[protein] + [thioredoxin]-dithiol. It catalyses the reaction [thioredoxin]-disulfide + L-methionine + H2O = L-methionine (S)-S-oxide + [thioredoxin]-dithiol. In terms of biological role, has an important function as a repair enzyme for proteins that have been inactivated by oxidation. Catalyzes the reversible oxidation-reduction of methionine sulfoxide in proteins to methionine. The sequence is that of Peptide methionine sulfoxide reductase MsrA from Campylobacter jejuni subsp. jejuni serotype O:23/36 (strain 81-176).